The chain runs to 269 residues: 3-methyl-2-oxobutanoate hydroxymethyltransferase (269 aa).

Mg(2+) is bound by residues D50 and D89. Residues 50–51, D89, and K118 contribute to the 3-methyl-2-oxobutanoate site; that span reads DS. E120 contacts Mg(2+). The Proton acceptor role is filled by E187.

Belongs to the PanB family. In terms of assembly, homodecamer; pentamer of dimers. It depends on Mg(2+) as a cofactor.

It localises to the cytoplasm. It carries out the reaction 3-methyl-2-oxobutanoate + (6R)-5,10-methylene-5,6,7,8-tetrahydrofolate + H2O = 2-dehydropantoate + (6S)-5,6,7,8-tetrahydrofolate. It functions in the pathway cofactor biosynthesis; (R)-pantothenate biosynthesis; (R)-pantoate from 3-methyl-2-oxobutanoate: step 1/2. Functionally, catalyzes the reversible reaction in which hydroxymethyl group from 5,10-methylenetetrahydrofolate is transferred onto alpha-ketoisovalerate to form ketopantoate. The chain is 3-methyl-2-oxobutanoate hydroxymethyltransferase from Nitrosomonas europaea (strain ATCC 19718 / CIP 103999 / KCTC 2705 / NBRC 14298).